The primary structure comprises 477 residues: Glycogen synthase (477 aa).

Residue K15 coordinates ADP-alpha-D-glucose.

Belongs to the glycosyltransferase 1 family. Bacterial/plant glycogen synthase subfamily.

It catalyses the reaction [(1-&gt;4)-alpha-D-glucosyl](n) + ADP-alpha-D-glucose = [(1-&gt;4)-alpha-D-glucosyl](n+1) + ADP + H(+). The protein operates within glycan biosynthesis; glycogen biosynthesis. Synthesizes alpha-1,4-glucan chains using ADP-glucose. The chain is Glycogen synthase from Shigella sonnei (strain Ss046).